The following is a 74-amino-acid chain: Sec-independent protein translocase protein TatA (74 aa).

The chain crosses the membrane as a helical span at residues 1-21 (MGSMSWIHWVIVLGIVALLFG). Residues 51 to 74 (EVADNKAKSALPRTEAEAEELRKS) form a disordered region. Positions 64–74 (TEAEAEELRKS) are enriched in basic and acidic residues.

This sequence belongs to the TatA/E family. As to quaternary structure, the Tat system comprises two distinct complexes: a TatABC complex, containing multiple copies of TatA, TatB and TatC subunits, and a separate TatA complex, containing only TatA subunits. Substrates initially bind to the TatABC complex, which probably triggers association of the separate TatA complex to form the active translocon.

It localises to the cell inner membrane. Its function is as follows. Part of the twin-arginine translocation (Tat) system that transports large folded proteins containing a characteristic twin-arginine motif in their signal peptide across membranes. TatA could form the protein-conducting channel of the Tat system. This is Sec-independent protein translocase protein TatA from Caulobacter vibrioides (strain ATCC 19089 / CIP 103742 / CB 15) (Caulobacter crescentus).